A 150-amino-acid polypeptide reads, in one-letter code: SsrA-binding protein (150 aa).

The protein belongs to the SmpB family.

It localises to the cytoplasm. Functionally, required for rescue of stalled ribosomes mediated by trans-translation. Binds to transfer-messenger RNA (tmRNA), required for stable association of tmRNA with ribosomes. tmRNA and SmpB together mimic tRNA shape, replacing the anticodon stem-loop with SmpB. tmRNA is encoded by the ssrA gene; the 2 termini fold to resemble tRNA(Ala) and it encodes a 'tag peptide', a short internal open reading frame. During trans-translation Ala-aminoacylated tmRNA acts like a tRNA, entering the A-site of stalled ribosomes, displacing the stalled mRNA. The ribosome then switches to translate the ORF on the tmRNA; the nascent peptide is terminated with the 'tag peptide' encoded by the tmRNA and targeted for degradation. The ribosome is freed to recommence translation, which seems to be the essential function of trans-translation. The sequence is that of SsrA-binding protein from Campylobacter jejuni subsp. jejuni serotype O:6 (strain 81116 / NCTC 11828).